A 661-amino-acid chain; its full sequence is Acyl-coenzyme A oxidase acox-1.2 (661 aa).

FAD contacts are provided by residues 147–150, 155–156, and Gly189; these read YAQT and GS. Substrate-binding positions include 283 to 286 and Arg293; that span reads KIGY. Residues Arg318 and 338–341 each bind FAD; that span reads QQHR. ATP-binding residues include His340, Ser390, His394, and Gln402. Gly409 is a binding site for FAD. 431 to 432 lines the substrate pocket; sequence YE. Residue Glu432 is the Proton acceptor of the active site. Glu434 provides a ligand contact to FAD. ATP is bound by residues 525 to 528 and Tyr573; that span reads RASR. A Microbody targeting signal motif is present at residues 659-661; sequence AKL.

This sequence belongs to the acyl-CoA oxidase family. In terms of assembly, homodimer. Forms a heterodimer with acox-1.1. The cofactor is FAD.

The protein resides in the peroxisome. It catalyses the reaction asc-omegaC5-CoA + O2 = asc-omegaDeltaC5-CoA + H2O2. It participates in lipid metabolism; peroxisomal fatty acid beta-oxidation. Activated by ATP. ATP binding leads to a conformational change that promotes FAD cofactor binding and enzyme activity. ATP binding likely occurs during acox-1.2 folding and/or dimer formation. The preference for processing substrates with shorter fatty acid chains is likely due to the closed conformation of the active site. Functionally, involved in the first step of peroxisomal beta-oxidation by catalyzing the desaturation of fatty acid-derived side chains of ascaroside pheromones, which regulates development and behavior. Specifically, shortens ascarosides with 5-carbon omega side chain (asc-omega-C5). Does not shorten indol-3-carbonyl(IC)-ascaroside with 7-carbon or 9-carbon side chains. Does not catalyze the desaturation of fatty acids or hydroxylated fatty acids. This is Acyl-coenzyme A oxidase acox-1.2 from Caenorhabditis elegans.